The primary structure comprises 256 residues: Anamorsin homolog (256 aa).

Positions M1–I136 are N-terminal SAM-like domain. The disordered stretch occupies residues W126 to I148. Residues S131–P144 are compositionally biased toward low complexity. Residues P137–T166 form a linker region. [2Fe-2S] cluster-binding residues include C176, C185, C188, and C190. The segment at C176–C190 is fe-S binding site A. C217, C220, C228, and C231 together coordinate [4Fe-4S] cluster. Short sequence motifs (cx2C motif) lie at residues C217–C220 and C228–C231. A fe-S binding site B region spans residues C217–C231.

The protein belongs to the anamorsin family. In terms of assembly, monomer. [2Fe-2S] cluster serves as cofactor. Requires [4Fe-4S] cluster as cofactor.

The protein resides in the cytoplasm. The protein localises to the mitochondrion intermembrane space. Functionally, component of the cytosolic iron-sulfur (Fe-S) protein assembly (CIA) machinery. Required for the maturation of extramitochondrial Fe-S proteins. Part of an electron transfer chain functioning in an early step of cytosolic Fe-S biogenesis, facilitating the de novo assembly of a [4Fe-4S] cluster on the cytosolic Fe-S scaffold complex. Electrons are transferred from NADPH via a FAD- and FMN-containing diflavin oxidoreductase. Together with the diflavin oxidoreductase, also required for the assembly of the diferric tyrosyl radical cofactor of ribonucleotide reductase (RNR), probably by providing electrons for reduction during radical cofactor maturation in the catalytic small subunit. This Dictyostelium discoideum (Social amoeba) protein is Anamorsin homolog (rsc43).